The primary structure comprises 348 residues: MLKKTTWIKLPRNVLVGHDVIGDLAAAIEELYLDGRPLIVTSPTPDQLIGNRVRSQFADPQTVSVDHASFDAVEAVIDTAKATDAGYLIGLGGGKPIDTAKMASDRLGCGFVSVPTAASHDGIVSGRSSIPEGDTRHSVAADPPLAVVADTAVLAEAPWELTTAGCADIISNYTAVKDWQLAHRLQDVEYSEYAGALSQMTAEMLVDNSDAIKQGFEESAWLVAKALVSSGVAMSIAGSSRPASGAEHLISHQLDRLVPDAALHGHQVGVASIVTAYLHTGENGEWEDIRAALADVGAPTTATELGIDEEIFIQAITSAHAIRDRHTILGNGVSEAAAREAAVFTDVC.

NAD(+) is bound by residues 94 to 98 (GKPID) and 116 to 119 (TAAS). Position 121 (Asp121) interacts with substrate. Residue Ser125 coordinates NAD(+). Position 168 (Asp168) interacts with substrate. Zn(2+)-binding residues include Asp168 and His248. His252 contributes to the substrate binding site. Residue His264 coordinates Zn(2+).

The protein belongs to the glycerol-1-phosphate dehydrogenase family. Zn(2+) is required as a cofactor.

It is found in the cytoplasm. It carries out the reaction sn-glycerol 1-phosphate + NAD(+) = dihydroxyacetone phosphate + NADH + H(+). The catalysed reaction is sn-glycerol 1-phosphate + NADP(+) = dihydroxyacetone phosphate + NADPH + H(+). Its pathway is membrane lipid metabolism; glycerophospholipid metabolism. Functionally, catalyzes the NAD(P)H-dependent reduction of dihydroxyacetonephosphate (DHAP or glycerone phosphate) to glycerol 1-phosphate (G1P). The G1P thus generated is used as the glycerophosphate backbone of phospholipids in the cellular membranes of Archaea. This chain is Glycerol-1-phosphate dehydrogenase [NAD(P)+], found in Haloquadratum walsbyi (strain DSM 16790 / HBSQ001).